A 62-amino-acid chain; its full sequence is UPF0291 protein CLJ_B2839 (62 aa).

Belongs to the UPF0291 family.

It localises to the cytoplasm. In Clostridium botulinum (strain 657 / Type Ba4), this protein is UPF0291 protein CLJ_B2839.